Consider the following 137-residue polypeptide: Golgin subfamily A member 7 (137 aa).

2 S-palmitoyl cysteine lipidation sites follow: Cys69 and Cys72.

Belongs to the ERF4 family. Interacts with ZDHHC9.

Its subcellular location is the golgi apparatus membrane. Its function is as follows. May be involved in protein transport from Golgi to cell surface. The ZDHHC9-GOLGA7 complex is a palmitoyltransferase specific for HRAS and NRAS. The sequence is that of Golgin subfamily A member 7 (GOLGA7) from Gallus gallus (Chicken).